Here is a 240-residue protein sequence, read N- to C-terminus: MNAEKSPVNHNVDHEEIAKFEAVASRWWDLEGEFKPLHRINPLRLGYIAERAGGLFGKKVLDVGCGGGILAESMAREGATVTGLDMGFEPLQVAKLHALESGIQVDYVQETVEEHAAKHAGQYDVVTCMEMLEHVPDPQSVVRACAQLVKPGGDVFFSTLNRNGKSWLMAVVGAEYILRMVPKGTHDVKKFIKPAELLGWVDQTSLKERHITGLHYNPITNTFKLGPGVDVNYMLHTQNK.

S-adenosyl-L-methionine contacts are provided by Arg-44, Gly-64, Asp-85, and Met-129.

This sequence belongs to the methyltransferase superfamily. UbiG/COQ3 family.

It catalyses the reaction a 3-demethylubiquinol + S-adenosyl-L-methionine = a ubiquinol + S-adenosyl-L-homocysteine + H(+). It carries out the reaction a 3-(all-trans-polyprenyl)benzene-1,2-diol + S-adenosyl-L-methionine = a 2-methoxy-6-(all-trans-polyprenyl)phenol + S-adenosyl-L-homocysteine + H(+). It participates in cofactor biosynthesis; ubiquinone biosynthesis. O-methyltransferase that catalyzes the 2 O-methylation steps in the ubiquinone biosynthetic pathway. This Escherichia coli (strain K12 / MC4100 / BW2952) protein is Ubiquinone biosynthesis O-methyltransferase.